A 118-amino-acid chain; its full sequence is Large ribosomal subunit protein bL20 (118 aa).

It belongs to the bacterial ribosomal protein bL20 family.

Its function is as follows. Binds directly to 23S ribosomal RNA and is necessary for the in vitro assembly process of the 50S ribosomal subunit. It is not involved in the protein synthesizing functions of that subunit. In Edwardsiella ictaluri (strain 93-146), this protein is Large ribosomal subunit protein bL20.